The sequence spans 804 residues: Leucine--tRNA ligase (804 aa).

Positions Pro40–His51 match the 'HIGH' region motif. The 'KMSKS' region signature appears at Lys576–Ser580. Lys579 contacts ATP.

The protein belongs to the class-I aminoacyl-tRNA synthetase family.

It is found in the cytoplasm. The enzyme catalyses tRNA(Leu) + L-leucine + ATP = L-leucyl-tRNA(Leu) + AMP + diphosphate. The sequence is that of Leucine--tRNA ligase from Staphylococcus saprophyticus subsp. saprophyticus (strain ATCC 15305 / DSM 20229 / NCIMB 8711 / NCTC 7292 / S-41).